A 538-amino-acid chain; its full sequence is Putative cysteine ligase BshC (538 aa).

Residues 462 to 533 are a coiled coil; sequence LDHLEKRLLK…DPLESNFKIL (72 aa).

This sequence belongs to the BshC family.

This Christiangramia forsetii (strain DSM 17595 / CGMCC 1.15422 / KT0803) (Gramella forsetii) protein is Putative cysteine ligase BshC.